The following is a 33-amino-acid chain: Protein YdgV (33 aa).

This chain is Protein YdgV, found in Escherichia coli (strain K12).